The primary structure comprises 772 residues: uncharacterized protein (772 aa).

2 helical membrane-spanning segments follow: residues 16 to 36 and 301 to 321; these read LITFFCLLSTIPVILVGLFSY and IGWITFAVCLILLTLSLLFSW. Positions 670–768 constitute an HTH araC/xylS-type domain; the sequence is DNIIHIIHHE…GITPGNYRQQ (99 aa). DNA-binding regions (H-T-H motif) lie at residues 687 to 708 and 735 to 758; these read DEIARRLHYNPNYLSSIFKKEM and VKDIAEKLKYKNSQNFIRSFKKLE.

Its subcellular location is the cell membrane. This is an uncharacterized protein from Bacillus subtilis (strain 168).